The sequence spans 1017 residues: Peroxisomal ATPase PEX6 (1017 aa).

758 to 765 (GPPGTGKT) contributes to the ATP binding site.

Belongs to the AAA ATPase family. As to quaternary structure, interacts with PEX1; forming the PEX1-PEX6 AAA ATPase complex, which is composed of a heterohexamer formed by a trimer of PEX1-PEX6 dimers.

Its subcellular location is the cytoplasm. The protein resides in the cytosol. The protein localises to the peroxisome membrane. The catalysed reaction is ATP + H2O = ADP + phosphate + H(+). Its function is as follows. Component of the PEX1-PEX6 AAA ATPase complex, a protein dislocase complex that mediates the ATP-dependent extraction of the PEX5 receptor from peroxisomal membranes, an essential step for PEX5 recycling. Specifically recognizes PEX5 monoubiquitinated at 'Cys-6', and pulls it out of the peroxisome lumen through the PEX2-PEX10-PEX12 retrotranslocation channel. Extraction by the PEX1-PEX6 AAA ATPase complex is accompanied by unfolding of the TPR repeats and release of bound cargo from PEX5. This is Peroxisomal ATPase PEX6 (PEX6) from Candida glabrata (strain ATCC 2001 / BCRC 20586 / JCM 3761 / NBRC 0622 / NRRL Y-65 / CBS 138) (Yeast).